The following is a 969-amino-acid chain: Protein translocase subunit SecA (969 aa).

ATP contacts are provided by residues Gln99, 117–121 (GEGKT), and Asp631.

Belongs to the SecA family. Monomer and homodimer. Part of the essential Sec protein translocation apparatus which comprises SecA, SecYEG and auxiliary proteins SecDF. Other proteins may also be involved.

The protein resides in the cell inner membrane. It is found in the cytoplasm. It carries out the reaction ATP + H2O + cellular proteinSide 1 = ADP + phosphate + cellular proteinSide 2.. In terms of biological role, part of the Sec protein translocase complex. Interacts with the SecYEG preprotein conducting channel. Has a central role in coupling the hydrolysis of ATP to the transfer of proteins into and across the cell membrane, serving as an ATP-driven molecular motor driving the stepwise translocation of polypeptide chains across the membrane. This chain is Protein translocase subunit SecA, found in Chlamydia trachomatis serovar D (strain ATCC VR-885 / DSM 19411 / UW-3/Cx).